A 119-amino-acid chain; its full sequence is Large ribosomal subunit protein bL20 (119 aa).

Belongs to the bacterial ribosomal protein bL20 family.

Binds directly to 23S ribosomal RNA and is necessary for the in vitro assembly process of the 50S ribosomal subunit. It is not involved in the protein synthesizing functions of that subunit. The sequence is that of Large ribosomal subunit protein bL20 from Sorangium cellulosum (strain So ce56) (Polyangium cellulosum (strain So ce56)).